The chain runs to 79 residues: Acyl carrier protein (79 aa).

Residues 2-77 enclose the Carrier domain; sequence SDIEARVRKI…SAIDYANTHQ (76 aa). S37 is modified (O-(pantetheine 4'-phosphoryl)serine).

It belongs to the acyl carrier protein (ACP) family. Post-translationally, 4'-phosphopantetheine is transferred from CoA to a specific serine of apo-ACP by AcpS. This modification is essential for activity because fatty acids are bound in thioester linkage to the sulfhydryl of the prosthetic group.

Its subcellular location is the cytoplasm. Its pathway is lipid metabolism; fatty acid biosynthesis. Its function is as follows. Carrier of the growing fatty acid chain in fatty acid biosynthesis. This chain is Acyl carrier protein, found in Verminephrobacter eiseniae (strain EF01-2).